Consider the following 74-residue polypeptide: Cyclin-dependent kinases regulatory subunit (74 aa).

The protein belongs to the CKS family. Forms a homohexamer that can probably bind six kinase subunits.

Binds to the catalytic subunit of the cyclin dependent kinases Cdk1 and Cdk2, and is essential for their biological function. This Drosophila melanogaster (Fruit fly) protein is Cyclin-dependent kinases regulatory subunit (Cks30A).